A 279-amino-acid chain; its full sequence is Phosphatidylglycerol--prolipoprotein diacylglyceryl transferase (279 aa).

Helical transmembrane passes span L18–A38, I55–Q75, and I89–I109. R137 is a binding site for a 1,2-diacyl-sn-glycero-3-phospho-(1'-sn-glycerol). Transmembrane regions (helical) follow at residues L203–G223 and I235–Y255.

Belongs to the Lgt family.

The protein resides in the cell membrane. It carries out the reaction L-cysteinyl-[prolipoprotein] + a 1,2-diacyl-sn-glycero-3-phospho-(1'-sn-glycerol) = an S-1,2-diacyl-sn-glyceryl-L-cysteinyl-[prolipoprotein] + sn-glycerol 1-phosphate + H(+). It participates in protein modification; lipoprotein biosynthesis (diacylglyceryl transfer). Catalyzes the transfer of the diacylglyceryl group from phosphatidylglycerol to the sulfhydryl group of the N-terminal cysteine of a prolipoprotein, the first step in the formation of mature lipoproteins. This Staphylococcus aureus (strain Mu3 / ATCC 700698) protein is Phosphatidylglycerol--prolipoprotein diacylglyceryl transferase.